The chain runs to 458 residues: tRNA modification GTPase MnmE (458 aa).

3 residues coordinate (6S)-5-formyl-5,6,7,8-tetrahydrofolate: R22, E84, and R123. In terms of domain architecture, TrmE-type G spans 220-379; sequence GIATAIIGRP…LEKAIADLFF (160 aa). N230 contacts K(+). GTP-binding positions include 230–235, 249–255, and 274–277; these read NVGKSS, TDIAGTT, and DTAG. S234 contributes to the Mg(2+) binding site. The K(+) site is built by T249, I251, and T254. T255 is a Mg(2+) binding site. Residue K458 participates in (6S)-5-formyl-5,6,7,8-tetrahydrofolate binding.

It belongs to the TRAFAC class TrmE-Era-EngA-EngB-Septin-like GTPase superfamily. TrmE GTPase family. In terms of assembly, homodimer. Heterotetramer of two MnmE and two MnmG subunits. K(+) serves as cofactor.

It localises to the cytoplasm. Its function is as follows. Exhibits a very high intrinsic GTPase hydrolysis rate. Involved in the addition of a carboxymethylaminomethyl (cmnm) group at the wobble position (U34) of certain tRNAs, forming tRNA-cmnm(5)s(2)U34. The polypeptide is tRNA modification GTPase MnmE (Bacillus thuringiensis (strain Al Hakam)).